Here is a 429-residue protein sequence, read N- to C-terminus: Endo-beta-1,4-galactanase (429 aa).

A signal peptide spans 1 to 21 (MKSKVKMFFAAAIVWSACSST). 146–149 (DPAK) contributes to the substrate binding site. Glu-194 serves as the catalytic Proton donor. Residues 233–234 (TN) and His-267 each bind substrate. Residue Glu-292 is the Nucleophile of the active site. Residue Thr-296 coordinates substrate. The Ca(2+) site is built by Asp-301, Asp-303, His-305, and Asn-307. 2 residues coordinate substrate: Lys-311 and Asp-388. Ca(2+) is bound by residues Ser-396 and Asp-399.

It belongs to the glycosyl hydrolase 53 family. Requires Ca(2+) as cofactor.

Its subcellular location is the secreted. It carries out the reaction The enzyme specifically hydrolyzes (1-&gt;4)-beta-D-galactosidic linkages in type I arabinogalactans.. Functionally, involved in galactan degradation. Degrades arabinose-free galactan to galactooligosaccharides, producing galactotetraose as the main product along with galactotriose, galactobiose, and galactose. Is also able to degrade galactotetraose, galactotriose and galactobiose, suggesting an additional exo-mode of activity. May hydrolyze the beta-1,4-galactan linkages of the galactan portion of arabinogalactan type I, a pectic plant polysaccharide from which most of the arabinose has been removed. The protein is Endo-beta-1,4-galactanase of Bacillus subtilis (strain 168).